A 327-amino-acid polypeptide reads, in one-letter code: Thiosulfate dehydrogenase (327 aa).

A signal peptide spans 1–26 (MKIIPYRKRSVLIATIFAISAVGITG). The segment covering 66–78 (NDMTATAGGTDTA) has biased composition (low complexity). Positions 66-93 (NDMTATAGGTDTASGKPTIKMPDESTIP) are disordered. Cytochrome c domains follow at residues 99–196 (AAVR…SWLS) and 219–305 (PNTD…THLP). 6 residues coordinate heme c: Cys125, Cys128, His129, Cys232, Cys235, and His236.

Monomer. In terms of processing, binds 2 heme c groups covalently per subunit.

The protein resides in the periplasm. The enzyme catalyses 2 thiosulfate + 2 Fe(III)-[cytochrome c] = tetrathionate + 2 Fe(II)-[cytochrome c] + 2 H(+). Its function is as follows. Catalyzes the oxidation of 2 molecules of thiosulfate to tetrathionate. The protein is Thiosulfate dehydrogenase (tsdA) of Psychrobacter arcticus (strain DSM 17307 / VKM B-2377 / 273-4).